The chain runs to 275 residues: Large ribosomal subunit protein uL2 (275 aa).

The span at 35–49 shows a compositional bias: polar residues; it reads DSQSSTAGRNNNGRI. 2 disordered regions span residues 35–59 and 224–275; these read DSQS…GGHK and AMNP…RHKR. Residues 50 to 59 are compositionally biased toward basic residues; the sequence is TTRHKGGGHK.

Belongs to the universal ribosomal protein uL2 family. In terms of assembly, part of the 50S ribosomal subunit. Forms a bridge to the 30S subunit in the 70S ribosome.

Its function is as follows. One of the primary rRNA binding proteins. Required for association of the 30S and 50S subunits to form the 70S ribosome, for tRNA binding and peptide bond formation. It has been suggested to have peptidyltransferase activity; this is somewhat controversial. Makes several contacts with the 16S rRNA in the 70S ribosome. The chain is Large ribosomal subunit protein uL2 from Burkholderia orbicola (strain AU 1054).